The sequence spans 463 residues: Phosphomannomutase/phosphoglucomutase (463 aa).

Residue Y17 coordinates alpha-D-glucose 1-phosphate. Y17 lines the alpha-D-mannose 1-phosphate pocket. S108 serves as the catalytic Non-phosphorylated intermediate. The Mg(2+) site is built by S108, D242, D244, and D246. Position 108 is a phosphoserine (S108). Alpha-D-glucose 1-phosphate contacts are provided by residues K285, H308, 325–329 (EMSGH), and 421–425 (RASNT). Alpha-D-mannose 1-phosphate contacts are provided by residues H308, 325 to 329 (EMSGH), and 421 to 425 (RASNT).

Belongs to the phosphohexose mutase family. Monomer. The cofactor is Mg(2+).

The enzyme catalyses alpha-D-mannose 1-phosphate = D-mannose 6-phosphate. It catalyses the reaction alpha-D-glucose 1-phosphate = alpha-D-glucose 6-phosphate. It functions in the pathway nucleotide-sugar biosynthesis; GDP-alpha-D-mannose biosynthesis; alpha-D-mannose 1-phosphate from D-fructose 6-phosphate: step 2/2. Its pathway is bacterial outer membrane biogenesis; lipopolysaccharide biosynthesis. Highly reversible phosphoryltransferase. The phosphomannomutase activity produces a precursor for alginate polymerization, the alginate layer causes a mucoid phenotype and provides a protective barrier against host immune defenses and antibiotics. Also involved in core lipopolysaccaride (LPS) biosynthesis due to its phosphoglucomutase activity. Essential for rhamnolipid production, an exoproduct correlated with pathogenicity. Required for biofilm production. The reaction proceeds via 2 processive phosphoryl transferase reactions; first from enzyme-phospho-Ser-108 to the substrate (generating a bisphosphorylated substrate intermediate and a dephosphorylated enzyme), a 180 degree rotation of the intermediate (probably aided by movement of domain 4), and subsequent transfer of phosphate back to the enzyme. In Pseudomonas aeruginosa (strain UCBPP-PA14), this protein is Phosphomannomutase/phosphoglucomutase (algC).